The following is a 156-amino-acid chain: Small ribosomal subunit protein uS7 (156 aa).

Belongs to the universal ribosomal protein uS7 family. In terms of assembly, part of the 30S ribosomal subunit. Contacts proteins S9 and S11.

Its function is as follows. One of the primary rRNA binding proteins, it binds directly to 16S rRNA where it nucleates assembly of the head domain of the 30S subunit. Is located at the subunit interface close to the decoding center, probably blocks exit of the E-site tRNA. The chain is Small ribosomal subunit protein uS7 from Sinorhizobium medicae (strain WSM419) (Ensifer medicae).